The following is a 333-amino-acid chain: Probable tRNA-dihydrouridine synthase 1 (333 aa).

Residues 17-19 (PMA) and Gln71 each bind FMN. Residue Cys102 is the Proton donor of the active site. FMN contacts are provided by residues Lys141, 202–204 (NGD), and 226–227 (GR).

Belongs to the Dus family. It depends on FMN as a cofactor.

It carries out the reaction a 5,6-dihydrouridine in tRNA + NAD(+) = a uridine in tRNA + NADH + H(+). It catalyses the reaction a 5,6-dihydrouridine in tRNA + NADP(+) = a uridine in tRNA + NADPH + H(+). Its function is as follows. Catalyzes the synthesis of 5,6-dihydrouridine (D), a modified base found in the D-loop of most tRNAs, via the reduction of the C5-C6 double bond in target uridines. The polypeptide is Probable tRNA-dihydrouridine synthase 1 (dus1) (Bacillus subtilis (strain 168)).